Reading from the N-terminus, the 131-residue chain is Fumarate reductase subunit C (131 aa).

Transmembrane regions (helical) follow at residues 30–50, 57–77, and 109–129; these read EGTA…LFAL, WAGF…LITL, and IIKS…FVAL.

It belongs to the FrdC family. As to quaternary structure, part of an enzyme complex containing four subunits: a flavoprotein (FrdA), an iron-sulfur protein (FrdB), and two hydrophobic anchor proteins (FrdC and FrdD).

It is found in the cell inner membrane. Its function is as follows. Two distinct, membrane-bound, FAD-containing enzymes are responsible for the catalysis of fumarate and succinate interconversion; fumarate reductase is used in anaerobic growth, and succinate dehydrogenase is used in aerobic growth. Anchors the catalytic components of the fumarate reductase complex to the cell inner membrane, binds quinones. The polypeptide is Fumarate reductase subunit C (Shigella flexneri).